Consider the following 129-residue polypeptide: Small ribosomal subunit protein uS9 (129 aa).

Residues 107 to 129 (SRTVERKKYGRRKARRSPQFSKR) are disordered. Positions 114 to 129 (KYGRRKARRSPQFSKR) are enriched in basic residues.

This sequence belongs to the universal ribosomal protein uS9 family.

The chain is Small ribosomal subunit protein uS9 from Campylobacter jejuni subsp. jejuni serotype O:23/36 (strain 81-176).